Here is a 381-residue protein sequence, read N- to C-terminus: NF-kappa-B inhibitor-like protein 1 (381 aa).

Residues 1–34 (MSNPSPQAPEEEASTSVCRPQSCSMASASRRHRR) are disordered. Positions 14-27 (STSVCRPQSCSMAS) are enriched in polar residues. ANK repeat units lie at residues 64-93 (AGQP…ADPA) and 97-134 (RHGD…IKNK). Disordered regions lie at residues 132–167 (KNKD…REWR) and 186–298 (EDDA…WRFG). A Phosphoserine modification is found at S151. The segment covering 151-160 (SAEEEEDEEV) has biased composition (acidic residues). Basic and acidic residues-rich tracts occupy residues 205 to 218 (RLAR…RQQL) and 237 to 290 (RQHE…RGAE).

As to quaternary structure, interacts with CACTIN (via N-terminal domain); the interaction occurs in a pro-inflammatory-independent manner. In terms of tissue distribution, high expression found in heart muscle, liver, kidney and skin. Not detected in spleen, lung and brain.

The protein resides in the nucleus. Its function is as follows. Involved in the regulation of innate immune response. Acts as negative regulator of Toll-like receptor and interferon-regulatory factor (IRF) signaling pathways. Contributes to the negative regulation of transcriptional activation of NF-kappa-B target genes in response to endogenous pro-inflammatory stimuli. This is NF-kappa-B inhibitor-like protein 1 (Nfkbil1) from Mus musculus (Mouse).